Reading from the N-terminus, the 253-residue chain is N-acetylmuramoyl-L-alanine amidase CwlM (253 aa).

The 169-residue stretch at 4 to 172 folds into the MurNAc-LAA domain; the sequence is IFIDPGHGGS…IARGHANGLA (169 aa). An SPOR domain is found at 179–253; the sequence is KNAAALYKVQ…AEFDTFIYQE (75 aa). Repeat copies occupy residues 184-219 and 220-253. Positions 184-253 are 2 X 35 AA approximate tandem repeats; that stretch reads LYKVQIAAFR…AEFDTFIYQE (70 aa).

It belongs to the N-acetylmuramoyl-L-alanine amidase 3 family.

The protein resides in the secreted. The enzyme catalyses Hydrolyzes the link between N-acetylmuramoyl residues and L-amino acid residues in certain cell-wall glycopeptides.. Functionally, hydrolyzes the cell wall of M.luteus more efficiently than that of B.licheniformis and B.subtilis. The C-terminal region, including the repeats, determines substrate specificity. This chain is N-acetylmuramoyl-L-alanine amidase CwlM (cwlM), found in Bacillus licheniformis.